The chain runs to 527 residues: Protein SDS23 (527 aa).

The interval Met-1–Ser-75 is disordered. A Phosphoserine modification is found at Ser-9. Polar residues predominate over residues Pro-21–Glu-31. Residues Gln-32–His-48 are compositionally biased toward basic and acidic residues. Ser-42 and Ser-46 each carry phosphoserine. The span at Ser-52 to Ser-61 shows a compositional bias: low complexity. 4 CBS domains span residues Val-101–Val-162, Leu-185–Ser-243, Phe-272–Leu-330, and Cys-335–Pro-391. The disordered stretch occupies residues Gln-385–His-481. A compositionally biased stretch (low complexity) spans Pro-391–Ser-417. Over residues Tyr-418–Leu-449 the composition is skewed to polar residues. Ser-430 is subject to Phosphoserine. Over residues Ser-450–Ala-462 the composition is skewed to low complexity.

This sequence belongs to the SDS23 family.

It localises to the cytoplasm. The protein resides in the nucleus. Its function is as follows. Involved in DNA replication and cell separation during budding. The protein is Protein SDS23 (SDS23) of Saccharomyces cerevisiae (strain ATCC 204508 / S288c) (Baker's yeast).